The sequence spans 613 residues: Azole resistance protein 1 (613 aa).

Positions 1–38 (MKGEPKTYSMSDLSYYGEKAQQQNEKQQKQYVVRRNST) are disordered. Over 1 to 70 (MKGEPKTYSM…PKGFILYASL (70 aa)) the chain is Extracellular. The helical transmembrane segment at 71–91 (IALALSLFLAALDIMIVSTII) threads the bilayer. At 92-102 (EEVAKQFGSYS) the chain is on the cytoplasmic side. The chain crosses the membrane as a helical span at residues 103–123 (EIGWLFTGYSLPNALLALIWG). The Extracellular portion of the chain corresponds to 124–134 (RIATPIGFKET). The chain crosses the membrane as a helical span at residues 135 to 155 (MLFAIVIFEIGSLISALANSM). Topologically, residues 156-163 (SMLIGGRV) are cytoplasmic. A helical transmembrane segment spans residues 164-184 (IAGVGGCGIQSLSFVIGSTLV). At 185 to 189 (EESQR) the chain is on the extracellular side. The helical transmembrane segment at 190-210 (GILIAVLSCSFAIASVVGPFL) threads the bilayer. Over 211 to 221 (GGVFTSSVTWR) the chain is Cytoplasmic. Residues 222 to 242 (WCFYVNLPIGGLAFFLFLFFY) traverse the membrane as a helical segment. At 243 to 298 (NPGLSTFQETMDNIRKFPSQFIEIVRNVAYHLLKIKGFSKLNGWRKPFMELIFMYD) the chain is on the extracellular side. A helical transmembrane segment spans residues 299–319 (IIEFVFCSAGFTCILLAFTFG). The Cytoplasmic portion of the chain corresponds to 320–329 (GNRYAWNSAS). A helical membrane pass occupies residues 330–350 (IIILFIIGIVLVVLAGIYDFL). Topologically, residues 351-375 (VFPKFNIVKATPHYQPLMSWTNIKK) are extracellular. The chain crosses the membrane as a helical span at residues 376 to 396 (PGIFTVNIALFLTCAGYISQF). Residues 397–414 (TYIVQYFQLIYNDSAWRA) lie on the Cytoplasmic side of the membrane. A helical transmembrane segment spans residues 415–435 (AVHLVACIISTVVTAILCGAI). The Extracellular portion of the chain corresponds to 436-443 (TDKTRQIK). The chain crosses the membrane as a helical span at residues 444 to 464 (PIIVISSIFGVVGAGILTLLN). At 465-472 (NNANNSAH) the chain is on the cytoplasmic side. A helical transmembrane segment spans residues 473-493 (IGLLILPGVAFGGLAQSSMLA). The Extracellular segment spans residues 494-581 (SQIQLDKKSP…SKLGNIISES (88 aa)). The chain crosses the membrane as a helical span at residues 582–602 (LTDVFYMALGFYALSLIFAVF). Residues 603–613 (ASNKKVTASLR) lie on the Cytoplasmic side of the membrane.

Belongs to the major facilitator superfamily.

The protein resides in the cell membrane. Transporter protein required for adaptation to high stress imposed by low-chain organic acids, in particular by acetic acid, and for resistance to azoles, especially to ketoconazole and fluconazole. The chain is Azole resistance protein 1 (AZR1) from Saccharomyces cerevisiae (strain ATCC 204508 / S288c) (Baker's yeast).